Here is a 154-residue protein sequence, read N- to C-terminus: Probable cyclic pyranopterin monophosphate synthase (154 aa).

Substrate contacts are provided by residues 74–76 and 110–111; these read LCH and ME. Aspartate 125 is a catalytic residue.

The protein belongs to the MoaC family. Homohexamer; trimer of dimers.

It carries out the reaction (8S)-3',8-cyclo-7,8-dihydroguanosine 5'-triphosphate = cyclic pyranopterin phosphate + diphosphate. The protein operates within cofactor biosynthesis; molybdopterin biosynthesis. In terms of biological role, catalyzes the conversion of (8S)-3',8-cyclo-7,8-dihydroguanosine 5'-triphosphate to cyclic pyranopterin monophosphate (cPMP). In Methanosphaerula palustris (strain ATCC BAA-1556 / DSM 19958 / E1-9c), this protein is Probable cyclic pyranopterin monophosphate synthase.